We begin with the raw amino-acid sequence, 266 residues long: tRNA pseudouridine synthase A (266 aa).

Catalysis depends on aspartate 53, which acts as the Nucleophile. Tyrosine 109 is a binding site for substrate.

This sequence belongs to the tRNA pseudouridine synthase TruA family.

The catalysed reaction is uridine(38/39/40) in tRNA = pseudouridine(38/39/40) in tRNA. Functionally, formation of pseudouridine at positions 38, 39 and 40 in the anticodon stem and loop of transfer RNAs. This chain is tRNA pseudouridine synthase A, found in Methanocella arvoryzae (strain DSM 22066 / NBRC 105507 / MRE50).